Consider the following 289-residue polypeptide: ATP synthase subunit a (289 aa).

The next 6 membrane-spanning stretches (helical) occupy residues 43–63, 101–121, 160–180, 193–213, 232–252, and 259–279; these read AFHVDTLGWSVALGLIFVLIF, SAVIAPLALTIFVWVFLMNAV, LSVFALIIFYSIKVKGIGGFI, LFVQALLIPVNFLLEFVTLIA, VFILIAVMFGSGLLWLSGLGV, and AVFHILIITLQAFIFMMLTIV.

It belongs to the ATPase A chain family. In terms of assembly, F-type ATPases have 2 components, CF(1) - the catalytic core - and CF(0) - the membrane proton channel. CF(1) has five subunits: alpha(3), beta(3), gamma(1), delta(1), epsilon(1). CF(0) has three main subunits: a(1), b(2) and c(9-12). The alpha and beta chains form an alternating ring which encloses part of the gamma chain. CF(1) is attached to CF(0) by a central stalk formed by the gamma and epsilon chains, while a peripheral stalk is formed by the delta and b chains.

It is found in the cell inner membrane. Functionally, key component of the proton channel; it plays a direct role in the translocation of protons across the membrane. This is ATP synthase subunit a from Pseudomonas savastanoi pv. phaseolicola (strain 1448A / Race 6) (Pseudomonas syringae pv. phaseolicola (strain 1448A / Race 6)).